The chain runs to 629 residues: Bifunctional protein ArgHA (629 aa).

The interval 1-499 (MALWGGRFSQ…NLPRSRSDLV (499 aa)) is argininosuccinate lyase. Residues 464–598 (ISIRAARLTD…EKVLKDCDMC (135 aa)) form the N-acetyltransferase domain. The interval 500-629 (KAVGTFAVTE…INLKAEKLAS (130 aa)) is amino-acid acetyltransferase.

In the N-terminal section; belongs to the lyase 1 family. Argininosuccinate lyase subfamily. It in the C-terminal section; belongs to the acetyltransferase family. ArgA subfamily.

The protein localises to the cytoplasm. The catalysed reaction is 2-(N(omega)-L-arginino)succinate = fumarate + L-arginine. It carries out the reaction L-glutamate + acetyl-CoA = N-acetyl-L-glutamate + CoA + H(+). Its pathway is amino-acid biosynthesis; L-arginine biosynthesis; N(2)-acetyl-L-ornithine from L-glutamate: step 1/4. It functions in the pathway amino-acid biosynthesis; L-arginine biosynthesis; L-arginine from L-ornithine and carbamoyl phosphate: step 3/3. The polypeptide is Bifunctional protein ArgHA (argHA) (Moritella abyssi).